A 296-amino-acid polypeptide reads, in one-letter code: NAD kinase (296 aa).

The active-site Proton acceptor is Asp72. NAD(+)-binding positions include 72 to 73 (DG), 146 to 147 (ND), Arg157, Lys174, Asp176, 187 to 192 (TAYALS), and Gln247.

The protein belongs to the NAD kinase family. A divalent metal cation serves as cofactor.

Its subcellular location is the cytoplasm. The catalysed reaction is NAD(+) + ATP = ADP + NADP(+) + H(+). Its function is as follows. Involved in the regulation of the intracellular balance of NAD and NADP, and is a key enzyme in the biosynthesis of NADP. Catalyzes specifically the phosphorylation on 2'-hydroxyl of the adenosine moiety of NAD to yield NADP. This Pseudomonas fluorescens (strain Pf0-1) protein is NAD kinase.